Consider the following 149-residue polypeptide: UPF0260 protein Avin_32930 (149 aa).

The protein belongs to the UPF0260 family.

The protein is UPF0260 protein Avin_32930 of Azotobacter vinelandii (strain DJ / ATCC BAA-1303).